The sequence spans 282 residues: Phosphate import ATP-binding protein PstB (282 aa).

The span at 1–25 (MKALNANISTMSEVSRSATPQSDSP) shows a compositional bias: polar residues. Positions 1–26 (MKALNANISTMSEVSRSATPQSDSPA) are disordered. Residues 36-277 (IRIANFNAWY…PQEKRTDDYV (242 aa)) enclose the ABC transporter domain. Residue 68-75 (GPSGCGKS) participates in ATP binding.

This sequence belongs to the ABC transporter superfamily. Phosphate importer (TC 3.A.1.7) family. As to quaternary structure, the complex is composed of two ATP-binding proteins (PstB), two transmembrane proteins (PstC and PstA) and a solute-binding protein (PstS).

It localises to the cell inner membrane. The catalysed reaction is phosphate(out) + ATP + H2O = ADP + 2 phosphate(in) + H(+). Part of the ABC transporter complex PstSACB involved in phosphate import. Responsible for energy coupling to the transport system. The chain is Phosphate import ATP-binding protein PstB from Rhodopirellula baltica (strain DSM 10527 / NCIMB 13988 / SH1).